A 608-amino-acid polypeptide reads, in one-letter code: MNKEEMNARQKKIRNFSIIAHIDHGKSTLADRILEQTGALTHREMKNQLLDSMDLERERGITIKLNAVQLKYKAKDGETYIFHLIDTPGHVDFTYEVSRSLAACEGAILVVDAAQGIEAQTLANVYLALDNDLEILPVINKIDLPAADPERVRAEIEDVIGLDASDAVLASAKSGIGIEDILEQIVEKVPEPSGDVNKPLKALIFDSVFDAYRGVIANIRIMDGVVKAGDRIKMMSNGKEFEVTEVGVFSPKATPRDELLVGDVGYLTAAIKNVGDTRVGDTITLANNPAEEALDGYRKLNPMVYCGLYPIDSSKYNDLRDALEKLELNDSALQFEAETSQALGFGFRCGFLGLLHMEIIQERIEREFNIDLITTAPSVIYHVNLTDGSNIVVDNPADMPEPGVIESVEEPYVKATVMVPNDYVGAVMELAQNKRGNFITMEYLDDIRVSIVYEIPLSEIVYDFFDQLKSSTKGYASFDYELIGYKASKLVKMDILLNAEKVDALSFIVHRDFAYERGKIIVEKLKELIPRQQFEVPIQAAIATKIVSRSTIKALRKNVLAKCYGGDVSRKRKLLEKQKEGKKRMKQIGSVEVPQEAFMAILKMDESK.

The tr-type G domain maps to 11-193 (KKIRNFSIIA…QIVEKVPEPS (183 aa)). GTP contacts are provided by residues 23–28 (DHGKST) and 140–143 (NKID).

The protein belongs to the TRAFAC class translation factor GTPase superfamily. Classic translation factor GTPase family. LepA subfamily.

The protein localises to the cell membrane. It carries out the reaction GTP + H2O = GDP + phosphate + H(+). Its function is as follows. Required for accurate and efficient protein synthesis under certain stress conditions. May act as a fidelity factor of the translation reaction, by catalyzing a one-codon backward translocation of tRNAs on improperly translocated ribosomes. Back-translocation proceeds from a post-translocation (POST) complex to a pre-translocation (PRE) complex, thus giving elongation factor G a second chance to translocate the tRNAs correctly. Binds to ribosomes in a GTP-dependent manner. This chain is Elongation factor 4, found in Listeria welshimeri serovar 6b (strain ATCC 35897 / DSM 20650 / CCUG 15529 / CIP 8149 / NCTC 11857 / SLCC 5334 / V8).